The following is a 419-amino-acid chain: UDP-N-acetylglucosamine 1-carboxyvinyltransferase (419 aa).

Residue 22–23 (KN) coordinates phosphoenolpyruvate. R91 is a binding site for UDP-N-acetyl-alpha-D-glucosamine. C115 functions as the Proton donor in the catalytic mechanism. At C115 the chain carries 2-(S-cysteinyl)pyruvic acid O-phosphothioketal. UDP-N-acetyl-alpha-D-glucosamine-binding positions include 120–124 (RPVDL), 160–163 (KVSV), D305, and I327.

This sequence belongs to the EPSP synthase family. MurA subfamily.

Its subcellular location is the cytoplasm. The catalysed reaction is phosphoenolpyruvate + UDP-N-acetyl-alpha-D-glucosamine = UDP-N-acetyl-3-O-(1-carboxyvinyl)-alpha-D-glucosamine + phosphate. Its pathway is cell wall biogenesis; peptidoglycan biosynthesis. In terms of biological role, cell wall formation. Adds enolpyruvyl to UDP-N-acetylglucosamine. The chain is UDP-N-acetylglucosamine 1-carboxyvinyltransferase from Serratia proteamaculans (strain 568).